The following is a 150-amino-acid chain: Ribonuclease K6 (150 aa).

Residues 1 to 23 (MVLCFPLLLLLLVLWGPVCLLHA) form the signal peptide. The Proton acceptor role is filled by histidine 38. 4 disulfide bridges follow: cysteine 46–cysteine 104, cysteine 60–cysteine 114, cysteine 78–cysteine 129, and cysteine 85–cysteine 92. Residue asparagine 55 is glycosylated (N-linked (GlcNAc...) asparagine). Substrate-binding positions include 61 to 65 (KHQNT) and lysine 86. N-linked (GlcNAc...) asparagine glycosylation occurs at asparagine 100. Arginine 105 contacts substrate. The active-site Proton donor is histidine 145.

The protein belongs to the pancreatic ribonuclease family. Interacts (via N-terminus) with bacterial lipopolysaccharide (LPS).

The protein localises to the secreted. The protein resides in the lysosome. Its subcellular location is the cytoplasmic granule. Ribonuclease which shows a preference for the pyrimidines uridine and cytosine. Has potent antibacterial activity against a range of Gram-positive and Gram-negative bacteria, including P.aeruginosa, A.baumanii, M.luteus, S.aureus, E.faecalis, E.faecium, S.saprophyticus and E.coli. Causes loss of bacterial membrane integrity, and also promotes agglutination of Gram-negative bacteria. Probably contributes to urinary tract sterility. Bactericidal activity is independent of RNase activity. This Macaca mulatta (Rhesus macaque) protein is Ribonuclease K6 (RNASE6).